A 149-amino-acid chain; its full sequence is 3-hydroxyacyl-[acyl-carrier-protein] dehydratase FabZ (149 aa).

His53 is a catalytic residue.

Belongs to the thioester dehydratase family. FabZ subfamily.

Its subcellular location is the cytoplasm. The enzyme catalyses a (3R)-hydroxyacyl-[ACP] = a (2E)-enoyl-[ACP] + H2O. In terms of biological role, involved in unsaturated fatty acids biosynthesis. Catalyzes the dehydration of short chain beta-hydroxyacyl-ACPs and long chain saturated and unsaturated beta-hydroxyacyl-ACPs. This chain is 3-hydroxyacyl-[acyl-carrier-protein] dehydratase FabZ, found in Polynucleobacter necessarius subsp. necessarius (strain STIR1).